The chain runs to 184 residues: Small ribosomal subunit protein uS4c (184 aa).

The 62-residue stretch at 82 to 143 folds into the S4 RNA-binding domain; it reads MRLDNILFRL…KQRSKALIQN (62 aa).

The protein belongs to the universal ribosomal protein uS4 family. As to quaternary structure, part of the 30S ribosomal subunit. Contacts protein S5. The interaction surface between S4 and S5 is involved in control of translational fidelity.

It is found in the plastid. The protein resides in the chloroplast. Its function is as follows. One of the primary rRNA binding proteins, it binds directly to 16S rRNA where it nucleates assembly of the body of the 30S subunit. Functionally, with S5 and S12 plays an important role in translational accuracy. The polypeptide is Small ribosomal subunit protein uS4c (rps4) (Patersonia fragilis (Short purple-flag)).